The chain runs to 208 residues: Ribonuclease HII (208 aa).

The RNase H type-2 domain occupies 17 to 208; sequence LRVCGIDEAG…SFRLRQLGEK (192 aa). The a divalent metal cation site is built by Asp23, Glu24, and Asp120.

The protein belongs to the RNase HII family. Mn(2+) serves as cofactor. The cofactor is Mg(2+).

Its subcellular location is the cytoplasm. It carries out the reaction Endonucleolytic cleavage to 5'-phosphomonoester.. Its function is as follows. Endonuclease that specifically degrades the RNA of RNA-DNA hybrids. In Chlorobium luteolum (strain DSM 273 / BCRC 81028 / 2530) (Pelodictyon luteolum), this protein is Ribonuclease HII.